Reading from the N-terminus, the 115-residue chain is Large ribosomal subunit protein bL19 (115 aa).

The protein belongs to the bacterial ribosomal protein bL19 family.

Functionally, this protein is located at the 30S-50S ribosomal subunit interface and may play a role in the structure and function of the aminoacyl-tRNA binding site. This is Large ribosomal subunit protein bL19 from Baumannia cicadellinicola subsp. Homalodisca coagulata.